A 236-amino-acid chain; its full sequence is Orotidine 5'-phosphate decarboxylase (236 aa).

Substrate-binding positions include Asp17, Lys39, 66–75 (DLKFHDIPNT), Thr125, Arg186, Gln195, Gly215, and Arg216. Lys68 functions as the Proton donor in the catalytic mechanism.

Belongs to the OMP decarboxylase family. Type 1 subfamily. Homodimer.

The enzyme catalyses orotidine 5'-phosphate + H(+) = UMP + CO2. Its pathway is pyrimidine metabolism; UMP biosynthesis via de novo pathway; UMP from orotate: step 2/2. Catalyzes the decarboxylation of orotidine 5'-monophosphate (OMP) to uridine 5'-monophosphate (UMP). This is Orotidine 5'-phosphate decarboxylase from Buchnera aphidicola subsp. Acyrthosiphon pisum (strain 5A).